A 329-amino-acid chain; its full sequence is MALTLQVKNELATVPVQKLCCRRSEIAATLRFAGGIHLVQHRHLTIEAEVDTGGAARRLRQSIQEVFGFDTDLVVVNGAGLHSNTRYLIRMVRGGADLARLTGLLDRRGRPVRGLPVPIVGGGRCCQAAAWRGAFLARGSLTEPGRSMAMEITAPGEEAAMALVGAARRLDITAKQRESRHVDRVTIRDGDAISAMLTRMGAHESVLAWEDRRLRREVRASANRLANFDDANLRRSARAAVTASARVERALEILGDSVPDHLRAAGRLRLEHRNASLEELGKVHEPPLTKDAIAGRIRRLLALADKTARSNGEPTTLESLPVEMRDDRG.

The segment at residues 276-309 (SLEELGKVHEPPLTKDAIAGRIRRLLALADKTAR) is a DNA-binding region (H-T-H motif). The segment at 308 to 329 (ARSNGEPTTLESLPVEMRDDRG) is disordered. A compositionally biased stretch (polar residues) spans 309 to 318 (RSNGEPTTLE).

The protein belongs to the WhiA family.

In terms of biological role, involved in cell division and chromosome segregation. The protein is Probable cell division protein WhiA of Cutibacterium acnes (strain DSM 16379 / KPA171202) (Propionibacterium acnes).